A 66-amino-acid polypeptide reads, in one-letter code: U8-myrmicitoxin-Tb1a (66 aa).

A signal peptide spans 1–26 (MKLSFLSLAFAVIFVMAIMYAPQVEA). Residues 27 to 50 (KASADADADADAAASADALAKASA) constitute a propeptide that is removed on maturation.

Expressed by the venom gland.

The protein localises to the secreted. In vivo, this neurotoxin paralyzes about 50% of blowflies (L.caesar) one hour after intrathoracic injection, when tested at high doses (54 nmol/g). The chain is U8-myrmicitoxin-Tb1a from Tetramorium bicarinatum (Tramp ant).